Consider the following 588-residue polypeptide: Probable metalloprotease ARX1 (588 aa).

The protein belongs to the peptidase M24 family. As to quaternary structure, component of the nucleoplasmic and cytoplasmic pre-60S ribosomal particles.

It localises to the cytoplasm. Its subcellular location is the nucleus. Its function is as follows. Probable metalloprotease involved in proper assembly of pre-ribosomal particles during the biogenesis of the 60S ribosomal subunit. Accompanies the pre-60S particles to the cytoplasm. This is Probable metalloprotease ARX1 (ARX1) from Candida glabrata (strain ATCC 2001 / BCRC 20586 / JCM 3761 / NBRC 0622 / NRRL Y-65 / CBS 138) (Yeast).